Consider the following 398-residue polypeptide: Phosphoglycerate kinase (398 aa).

Substrate is bound by residues 23–25, arginine 38, 61–64, arginine 122, and arginine 155; these read DFN and HMGK. ATP contacts are provided by residues lysine 206, glycine 297, glutamate 328, and 354-357; that span reads GGDS.

It belongs to the phosphoglycerate kinase family. Monomer.

It is found in the cytoplasm. The enzyme catalyses (2R)-3-phosphoglycerate + ATP = (2R)-3-phospho-glyceroyl phosphate + ADP. It functions in the pathway carbohydrate degradation; glycolysis; pyruvate from D-glyceraldehyde 3-phosphate: step 2/5. The sequence is that of Phosphoglycerate kinase from Clostridium botulinum (strain Kyoto / Type A2).